The sequence spans 467 residues: Glutamate--tRNA ligase (467 aa).

The 'HIGH' region motif lies at Pro-9–Gly-19. Positions Lys-250 to Arg-254 match the 'KMSKS' region motif. Residue Lys-253 participates in ATP binding.

The protein belongs to the class-I aminoacyl-tRNA synthetase family. Glutamate--tRNA ligase type 1 subfamily. Monomer.

It is found in the cytoplasm. The enzyme catalyses tRNA(Glu) + L-glutamate + ATP = L-glutamyl-tRNA(Glu) + AMP + diphosphate. Functionally, catalyzes the attachment of glutamate to tRNA(Glu) in a two-step reaction: glutamate is first activated by ATP to form Glu-AMP and then transferred to the acceptor end of tRNA(Glu). The chain is Glutamate--tRNA ligase from Mesomycoplasma hyopneumoniae (strain 7448) (Mycoplasma hyopneumoniae).